The primary structure comprises 55 residues: Sec-independent protein translocase protein TatA (55 aa).

A helical membrane pass occupies residues 1–21; sequence MFGELGVPEVLFILGIALLIF.

This sequence belongs to the TatA/E family. In terms of assembly, forms a complex with TatC.

The protein resides in the cell inner membrane. Part of the twin-arginine translocation (Tat) system that transports large folded proteins containing a characteristic twin-arginine motif in their signal peptide across membranes. TatA could form the protein-conducting channel of the Tat system. The polypeptide is Sec-independent protein translocase protein TatA (Koribacter versatilis (strain Ellin345)).